We begin with the raw amino-acid sequence, 343 residues long: Heat-inducible transcription repressor HrcA (343 aa).

Belongs to the HrcA family.

Its function is as follows. Negative regulator of class I heat shock genes (grpE-dnaK-dnaJ and groELS operons). Prevents heat-shock induction of these operons. The protein is Heat-inducible transcription repressor HrcA of Mycobacterium avium (strain 104).